We begin with the raw amino-acid sequence, 172 residues long: Stellate protein CG33247 (172 aa).

It belongs to the casein kinase 2 subunit beta family. Interacts in vitro with the casein kinase 2 alpha subunit (CkII-alpha). The relevance of such interaction is however unclear in vivo. In terms of tissue distribution, probably not expressed in wild-type flies. In males lacking the Y chromosome, it is testis-specific and constitutes the main component of star-shaped crystals.

Its function is as follows. Unknown. In males lacking the Y chromosome, its strong overexpression leads to the appearance of proteinaceous star-shaped crystals in the primary spermatocytes causing meiotic drive, possibly by interfering with normal casein kinase 2 activity. In Drosophila melanogaster (Fruit fly), this protein is Stellate protein CG33247 (Ste:CG33247).